The sequence spans 1014 residues: Probable LRR receptor-like serine/threonine-protein kinase At1g07650 (1014 aa).

Positions 1 to 23 (MIYLHRIYFIIVLFTLIFHGRLG) are cleaved as a signal peptide. Over 24–619 (FSDNNKLHEA…KPPVYYDTKD (596 aa)) the chain is Extracellular. N-linked (GlcNAc...) asparagine glycosylation is found at Asn76, Asn87, and Asn101. LRR repeat units lie at residues 89-112 (SCHV…EFSK), 113-137 (LRHL…WASM), 139-160 (LEDL…LTRL), 161-184 (TMLR…IGQL), 186-207 (HLEK…KLGL), 208-234 (LKNL…NWTR), 256-279 (LTSL…PLKN), 280-304 (LESI…IGDL), 305-327 (KKLK…SFEN), 329-352 (KKAD…FVER), and 354-376 (KNVD…DCNR). A glycan (N-linked (GlcNAc...) asparagine) is linked at Asn165. N-linked (GlcNAc...) asparagine glycosylation is found at Asn210, Asn220, and Asn231. N-linked (GlcNAc...) asparagine glycosylation is found at Asn362, Asn389, Asn474, Asn481, and Asn511. One copy of the LRR 12 repeat lies at 516–539 (LHFAEIIFTDDNTLYSLGKRLFDI). An N-linked (GlcNAc...) asparagine glycan is attached at Asn570. The chain crosses the membrane as a helical span at residues 620–640 (IILKVGVPVAAATLLLFIIVG). Residues 641 to 1014 (VFWKKRRDKN…DAEEKTGLLD (374 aa)) are Cytoplasmic-facing. A Phosphothreonine modification is found at Thr667. Residues 678–960 (FDVTRKIGEG…EGKTAMQELL (283 aa)) form the Protein kinase domain. Residues 684–692 (IGEGGFGSV) and Lys706 each bind ATP. At Tyr751 the chain carries Phosphotyrosine. Asp805 acts as the Proton acceptor in catalysis. 2 positions are modified to phosphoserine: Ser809 and Ser838. Residues Thr839 and Thr844 each carry the phosphothreonine modification. At Tyr852 the chain carries Phosphotyrosine. Ser989 bears the Phosphoserine mark. A compositionally biased stretch (polar residues) spans 989 to 1002 (SFSTSGPRTASANS). The segment at 989–1014 (SFSTSGPRTASANSLVDAEEKTGLLD) is disordered.

This sequence belongs to the protein kinase superfamily. Ser/Thr protein kinase family.

Its subcellular location is the membrane. The enzyme catalyses L-seryl-[protein] + ATP = O-phospho-L-seryl-[protein] + ADP + H(+). It catalyses the reaction L-threonyl-[protein] + ATP = O-phospho-L-threonyl-[protein] + ADP + H(+). The chain is Probable LRR receptor-like serine/threonine-protein kinase At1g07650 from Arabidopsis thaliana (Mouse-ear cress).